Here is a 732-residue protein sequence, read N- to C-terminus: 1,4-alpha-glucan branching enzyme GlgB (732 aa).

D412 (nucleophile) is an active-site residue. The Proton donor role is filled by E465.

It belongs to the glycosyl hydrolase 13 family. GlgB subfamily. As to quaternary structure, monomer.

It carries out the reaction Transfers a segment of a (1-&gt;4)-alpha-D-glucan chain to a primary hydroxy group in a similar glucan chain.. Its pathway is glycan biosynthesis; glycogen biosynthesis. Catalyzes the formation of the alpha-1,6-glucosidic linkages in glycogen by scission of a 1,4-alpha-linked oligosaccharide from growing alpha-1,4-glucan chains and the subsequent attachment of the oligosaccharide to the alpha-1,6 position. This chain is 1,4-alpha-glucan branching enzyme GlgB, found in Pseudomonas aeruginosa (strain ATCC 15692 / DSM 22644 / CIP 104116 / JCM 14847 / LMG 12228 / 1C / PRS 101 / PAO1).